The primary structure comprises 525 residues: Glucans biosynthesis protein G (525 aa).

A signal peptide spans 1 to 35 (MIFRSVSNTDFRARVRTLLLAGSTALAFVAAPVWA).

Belongs to the OpgD/OpgG family.

The protein resides in the periplasm. Its pathway is glycan metabolism; osmoregulated periplasmic glucan (OPG) biosynthesis. Functionally, involved in the biosynthesis of osmoregulated periplasmic glucans (OPGs). The polypeptide is Glucans biosynthesis protein G (Pseudomonas paraeruginosa (strain DSM 24068 / PA7) (Pseudomonas aeruginosa (strain PA7))).